The primary structure comprises 189 residues: MVPVLLLLPALAGLFGAAEGQAFHLGKCPHPPVQENFDVNKYLGKWYEIEKIPVSFEKGSCIQANYSLKENGNVEVINKELRADGTVNQIEGEATPENITEPAKLAVKFFWFMPSAPYWVLATDYENYALVYSCTTIIWLFHMDHVWILGRNPYLPPETVTYLKDILTSNNIEVEKMTITDQVNCPESM.

The first 20 residues, 1–20 (MVPVLLLLPALAGLFGAAEG), serve as a signal peptide directing secretion. Gln-21 carries the post-translational modification Pyrrolidone carboxylic acid. 2 disulfide bridges follow: Cys-28–Cys-134 and Cys-61–Cys-185. N-linked (GlcNAc...) asparagine glycosylation is found at Asn-65 and Asn-98.

This sequence belongs to the calycin superfamily. Lipocalin family. Homodimer.

It localises to the secreted. Functionally, APOD occurs in the macromolecular complex with lecithin-transport and binding of bilin. Appears to be able to transport a variety of ligands in a number of different contexts. The protein is Apolipoprotein D (APOD) of Bos taurus (Bovine).